Reading from the N-terminus, the 476-residue chain is uncharacterized protein (476 aa).

The LisH domain occupies 7-39 (SRFYTNLLIANYLKHNGLEDTLAAFIRETALPL).

This is an uncharacterized protein from Saccharomyces cerevisiae (strain ATCC 204508 / S288c) (Baker's yeast).